We begin with the raw amino-acid sequence, 271 residues long: UPF0758 protein ACIAD3126 (271 aa).

Residues 120-242 (NLNSSRLVLD…TFSFAERALL (123 aa)) enclose the MPN domain. 3 residues coordinate Zn(2+): His191, His193, and Asp204. The JAMM motif motif lies at 191 to 204 (HNHPFGKAEPSAAD).

This sequence belongs to the UPF0758 family.

This chain is UPF0758 protein ACIAD3126, found in Acinetobacter baylyi (strain ATCC 33305 / BD413 / ADP1).